We begin with the raw amino-acid sequence, 119 residues long: NADH-quinone oxidoreductase subunit A (119 aa).

Transmembrane regions (helical) follow at residues 9–29 (VLLFILVGIGVGVVPLLLGYV), 63–83 (LVAILFILFDLEIAFLFPWAV), and 88–108 (VGVTGFVAVLVFLAILVVGFA).

The protein belongs to the complex I subunit 3 family. As to quaternary structure, NDH-1 is composed of 14 different subunits. Subunits NuoA, H, J, K, L, M, N constitute the membrane sector of the complex.

The protein localises to the cell inner membrane. It catalyses the reaction a quinone + NADH + 5 H(+)(in) = a quinol + NAD(+) + 4 H(+)(out). Functionally, NDH-1 shuttles electrons from NADH, via FMN and iron-sulfur (Fe-S) centers, to quinones in the respiratory chain. The immediate electron acceptor for the enzyme in this species is believed to be ubiquinone. Couples the redox reaction to proton translocation (for every two electrons transferred, four hydrogen ions are translocated across the cytoplasmic membrane), and thus conserves the redox energy in a proton gradient. The polypeptide is NADH-quinone oxidoreductase subunit A (Acidovorax sp. (strain JS42)).